The sequence spans 299 residues: dTDP-4-dehydrorhamnose reductase (299 aa).

Residues 10-12 (GQV), D30, 39-40 (DF), and 63-65 (AHT) each bind NADH. Position 11 to 12 (11 to 12 (QV)) interacts with NADPH. Residues 39–40 (DF), 63–65 (AHT), and Y102 contribute to the NADPH site. 104-105 (TD) provides a ligand contact to dTDP-beta-L-rhamnose. The NADH site is built by Y128 and K132. The NADPH site is built by Y128 and K132. The Proton donor/acceptor role is filled by Y128. W153 contacts dTDP-beta-L-rhamnose.

Belongs to the dTDP-4-dehydrorhamnose reductase family. In terms of assembly, homodimer. The cofactor is Mg(2+).

It catalyses the reaction dTDP-beta-L-rhamnose + NADP(+) = dTDP-4-dehydro-beta-L-rhamnose + NADPH + H(+). Its pathway is carbohydrate biosynthesis; dTDP-L-rhamnose biosynthesis. The protein operates within bacterial outer membrane biogenesis; LPS O-antigen biosynthesis. In terms of biological role, involved in the biosynthesis of the dTDP-L-rhamnose which is an important component of lipopolysaccharide (LPS). Catalyzes the reduction of dTDP-6-deoxy-L-lyxo-4-hexulose to yield dTDP-L-rhamnose. RmlD uses NADH and NADPH nearly equally well. This chain is dTDP-4-dehydrorhamnose reductase, found in Escherichia coli (strain K12).